A 469-amino-acid chain; its full sequence is Adenosylhomocysteinase (469 aa).

Positions 60, 135, and 195 each coordinate substrate. 196 to 198 (TTT) serves as a coordination point for NAD(+). Substrate is bound by residues Lys-225 and Asp-229. NAD(+) is bound by residues Asn-230, 259 to 264 (GYGDVG), Glu-282, Asn-317, 338 to 340 (IGH), and Asn-383.

Belongs to the adenosylhomocysteinase family. NAD(+) serves as cofactor.

It localises to the cytoplasm. It carries out the reaction S-adenosyl-L-homocysteine + H2O = L-homocysteine + adenosine. The protein operates within amino-acid biosynthesis; L-homocysteine biosynthesis; L-homocysteine from S-adenosyl-L-homocysteine: step 1/1. May play a key role in the regulation of the intracellular concentration of adenosylhomocysteine. The polypeptide is Adenosylhomocysteinase (Maricaulis maris (strain MCS10) (Caulobacter maris)).